The primary structure comprises 544 residues: Chaperonin GroEL (544 aa).

Residues 30 to 33 (TLGP), Lys-51, 87 to 91 (DGTTT), Gly-415, and Asp-495 contribute to the ATP site.

The protein belongs to the chaperonin (HSP60) family. In terms of assembly, forms a cylinder of 14 subunits composed of two heptameric rings stacked back-to-back. Interacts with the co-chaperonin GroES.

The protein resides in the cytoplasm. It carries out the reaction ATP + H2O + a folded polypeptide = ADP + phosphate + an unfolded polypeptide.. In terms of biological role, together with its co-chaperonin GroES, plays an essential role in assisting protein folding. The GroEL-GroES system forms a nano-cage that allows encapsulation of the non-native substrate proteins and provides a physical environment optimized to promote and accelerate protein folding. This is Chaperonin GroEL from Neisseria meningitidis serogroup C (strain 053442).